A 69-amino-acid chain; its full sequence is DNA-directed RNA polymerase subunit omega (69 aa).

This sequence belongs to the RNA polymerase subunit omega family. As to quaternary structure, the RNAP catalytic core consists of 2 alpha, 1 beta, 1 beta' and 1 omega subunit. When a sigma factor is associated with the core the holoenzyme is formed, which can initiate transcription.

The enzyme catalyses RNA(n) + a ribonucleoside 5'-triphosphate = RNA(n+1) + diphosphate. In terms of biological role, promotes RNA polymerase assembly. Latches the N- and C-terminal regions of the beta' subunit thereby facilitating its interaction with the beta and alpha subunits. This is DNA-directed RNA polymerase subunit omega from Geotalea daltonii (strain DSM 22248 / JCM 15807 / FRC-32) (Geobacter daltonii).